Here is a 238-residue protein sequence, read N- to C-terminus: Glycerol uptake facilitator protein 4 (238 aa).

2 helical membrane-spanning segments follow: residues 2–22 (IHQL…GVGV) and 39–59 (IFAI…FGNV). Positions 62–64 (NPA) match the NPA 1 motif. Transmembrane regions (helical) follow at residues 80–100 (FIPY…IVWI), 135–155 (FFVE…ISEV), and 158–178 (PGIV…GLGG). Residues 185–187 (NLA) carry the NPA 2 motif. Residues 211–231 (YGIIVPGIAPFVGAACAALFM) traverse the membrane as a helical segment.

It belongs to the MIP/aquaporin (TC 1.A.8) family.

It is found in the cell membrane. Transporter that facilitates the transmembrane diffusion of water, dihydroxyacetone, glycerol, urea, H(2)O(2) and D/L-lactic acid. Is involved in the cellular racemization of lactate and lactate metabolism, but has likely a more general physiological role. The transported molecule is indeed lactic acid and not the lactate anion, in agreement with the assumption that, with very few exceptions, MIPs (major intrinsic proteins) only facilitate the transport of uncharged solutes. This Lactiplantibacillus plantarum (strain ATCC BAA-793 / NCIMB 8826 / WCFS1) (Lactobacillus plantarum) protein is Glycerol uptake facilitator protein 4.